We begin with the raw amino-acid sequence, 344 residues long: uncharacterized protein (344 aa).

Residues 242–343 (RGITALVRSK…GVAPSEYSRR (102 aa)) form the HTH araC/xylS-type domain. 2 consecutive DNA-binding regions (H-T-H motif) follow at residues 263-284 (TDVA…AEEG) and 310-333 (VQQV…KRWY).

This is an uncharacterized protein from Mycobacterium bovis (strain ATCC BAA-935 / AF2122/97).